The sequence spans 649 residues: Echinoderm microtubule-associated protein-like 2 (649 aa).

Residues K10–A649 form a tandem atypical propeller in EMLs region. 12 WD repeats span residues K56 to V93, R97 to S144, H151 to W192, E195 to L234, K241 to K280, I285 to S323, F369 to S406, Q410 to T447, L452 to V489, K495 to A535, F564 to Y602, and A609 to V648.

This sequence belongs to the WD repeat EMAP family. In terms of assembly, interacts with GRID2 and may also interact with GRID1. Interacts with EML3. Binds unpolymerized tubulins via its WD repeat region. Widely expressed in both brain and peripheral tissues, including brainstem and enrichment in the postsynaptic density, PSD.

The protein localises to the cytoplasm. Its subcellular location is the cytoskeleton. It is found in the spindle. In terms of biological role, tubulin binding protein that inhibits microtubule nucleation and growth, resulting in shorter microtubules. The polypeptide is Echinoderm microtubule-associated protein-like 2 (Eml2) (Rattus norvegicus (Rat)).